Here is a 238-residue protein sequence, read N- to C-terminus: MRLEFSIYRYNPDVDDAPRMQDYTLEADEGRDMMLLDALIQLKEKDPSLSFRRSCREGVCGSDGLNMNGKNGLACITPISALNQPGKKIVIRPLPGLPVIRDLVVDMGQFYAQYEKIKPYLLNNGQNPPAREHLQMPEQREKLDGLYECILCACCSTSCPSFWWNPDKFIGPAGLLAAYRFLIDSRDTETDSRLDGLSDAFSVFRCHSIMNCVSVCPKGLNPTRAIGHIKSMLLQRNA.

A 2Fe-2S ferredoxin-type domain is found at 8–97 (YRYNPDVDDA…KIVIRPLPGL (90 aa)). Positions 55, 60, and 75 each coordinate [2Fe-2S] cluster. One can recognise a 4Fe-4S ferredoxin-type domain in the interval 139 to 169 (QREKLDGLYECILCACCSTSCPSFWWNPDKF). The [4Fe-4S] cluster site is built by Cys-149, Cys-152, and Cys-155. [3Fe-4S] cluster is bound at residue Cys-159. Residue Trp-164 participates in a ubiquinone binding. [3Fe-4S] cluster contacts are provided by Cys-206 and Cys-212. A [4Fe-4S] cluster-binding site is contributed by Cys-216.

This sequence belongs to the succinate dehydrogenase/fumarate reductase iron-sulfur protein family. As to quaternary structure, part of an enzyme complex containing four subunits: a flavoprotein, an iron-sulfur, cytochrome b-556, and a hydrophobic anchor protein. The complex forms trimers. Requires [2Fe-2S] cluster as cofactor. [3Fe-4S] cluster serves as cofactor. The cofactor is [4Fe-4S] cluster.

Its subcellular location is the cell inner membrane. The catalysed reaction is a quinone + succinate = fumarate + a quinol. Its pathway is carbohydrate metabolism; tricarboxylic acid cycle; fumarate from succinate (bacterial route): step 1/1. Functionally, two distinct, membrane-bound, FAD-containing enzymes are responsible for the catalysis of fumarate and succinate interconversion; the fumarate reductase is used in anaerobic growth, and the succinate dehydrogenase is used in aerobic growth. In Escherichia coli (strain K12), this protein is Succinate dehydrogenase iron-sulfur subunit (sdhB).